We begin with the raw amino-acid sequence, 156 residues long: MSRRRRPEKRVILPDPKFGDQVLSKFMNNLMLDGKKSVAESIVYGALEVMQTRAKADPVQLFHDALNNVRPQIEVRSRRVGGATYQVPVEVRPERAQALAIRWLITAARNRSETTMAARLSAELLDAANNRGNAVKKREDTHRMADANRAFSHYRW.

It belongs to the universal ribosomal protein uS7 family. As to quaternary structure, part of the 30S ribosomal subunit. Contacts proteins S9 and S11.

Functionally, one of the primary rRNA binding proteins, it binds directly to 16S rRNA where it nucleates assembly of the head domain of the 30S subunit. Is located at the subunit interface close to the decoding center, probably blocks exit of the E-site tRNA. The polypeptide is Small ribosomal subunit protein uS7 (Novosphingobium aromaticivorans (strain ATCC 700278 / DSM 12444 / CCUG 56034 / CIP 105152 / NBRC 16084 / F199)).